A 26-amino-acid chain; its full sequence is Muscarinic toxin-like protein 1 (26 aa).

It belongs to the three-finger toxin family. Short-chain subfamily. Orphan group VIII (haditoxin) sub-subfamily. In terms of assembly, homodimer; non-covalently linked. In terms of tissue distribution, expressed by the venom gland.

It is found in the secreted. Its function is as follows. Antagonist of muscle and neuronal nicotinic acetylcholine receptors (nAChR) with highest affinity for neuronal alpha-7/CHRNA7 nAChRs. This Naja naja (Indian cobra) protein is Muscarinic toxin-like protein 1.